The chain runs to 34 residues: Photosystem II reaction center protein M (34 aa).

Residues 5-25 (ILAFIATALFILIPTAFSLIL) traverse the membrane as a helical segment.

Belongs to the PsbM family. As to quaternary structure, PSII is composed of 1 copy each of membrane proteins PsbA, PsbB, PsbC, PsbD, PsbE, PsbF, PsbH, PsbI, PsbJ, PsbK, PsbL, PsbM, PsbT, PsbX, PsbY, PsbZ, Psb30/Ycf12, at least 3 peripheral proteins of the oxygen-evolving complex and a large number of cofactors. It forms dimeric complexes.

It is found in the plastid. The protein resides in the chloroplast thylakoid membrane. Its function is as follows. One of the components of the core complex of photosystem II (PSII). PSII is a light-driven water:plastoquinone oxidoreductase that uses light energy to abstract electrons from H(2)O, generating O(2) and a proton gradient subsequently used for ATP formation. It consists of a core antenna complex that captures photons, and an electron transfer chain that converts photonic excitation into a charge separation. This subunit is found at the monomer-monomer interface. This is Photosystem II reaction center protein M from Huperzia lucidula (Shining clubmoss).